The primary structure comprises 233 residues: 5-demethoxyubiquinone hydroxylase, mitochondrial (233 aa).

The N-terminal 15 residues, 1-15 (MLSRVSVFKPASRGF), are a transit peptide targeting the mitochondrion. Ser20 and Ser28 each carry phosphoserine. The residue at position 32 (Thr32) is a Phosphothreonine. Fe cation contacts are provided by Glu63, Glu95, His98, Glu147, Glu194, and His197.

It belongs to the COQ7 family. In terms of assembly, component of a multi-subunit COQ enzyme complex, composed of at least COQ3, COQ4, COQ5, COQ6, COQ7 and COQ9. It depends on Fe cation as a cofactor. In terms of processing, phosphorylated. Dephosphorylated by PTC7; dephosphorylation is essential for enzyme activation.

The protein localises to the mitochondrion inner membrane. The enzyme catalyses a 5-methoxy-2-methyl-3-(all-trans-polyprenyl)benzene-1,4-diol + AH2 + O2 = a 3-demethylubiquinol + A + H2O. It carries out the reaction a 5-methoxy-2-methyl-3-(all-trans-polyprenyl)benzoquinone + NADH + O2 = a 3-demethylubiquinone + NAD(+) + H2O. It participates in cofactor biosynthesis; ubiquinone biosynthesis. Its activity is regulated as follows. Dephosphorylation by PTC7 leads to activation. In terms of biological role, catalyzes the hydroxylation of 2-hexaprenyl-3-methyl-6-methoxy-1,4-benzoquinol (DMQH2) during ubiquinone biosynthesis. Also catalyzes the hydroxylation of the 5-methoxy-2-methyl-3-(all-trans-polyprenyl)benzoquinone at the C6 position and participates in the biosynthesis of ubiquinone. Also has a structural role in the COQ enzyme complex, stabilizing COQ3 and COQ4 polypeptides. This chain is 5-demethoxyubiquinone hydroxylase, mitochondrial, found in Saccharomyces cerevisiae (strain ATCC 204508 / S288c) (Baker's yeast).